The sequence spans 171 residues: Putative pre-16S rRNA nuclease (171 aa).

Belongs to the YqgF nuclease family.

The protein resides in the cytoplasm. Could be a nuclease involved in processing of the 5'-end of pre-16S rRNA. This is Putative pre-16S rRNA nuclease from Corynebacterium diphtheriae (strain ATCC 700971 / NCTC 13129 / Biotype gravis).